A 1174-amino-acid chain; its full sequence is Pesticidal crystal protein Cry1Fa (1174 aa).

It belongs to the delta endotoxin family.

Promotes colloidosmotic lysis by binding to the midgut epithelial cells of many lepidopteran larvae. The chain is Pesticidal crystal protein Cry1Fa (cry1Fa) from Bacillus thuringiensis subsp. aizawai.